The following is a 405-amino-acid chain: Argininosuccinate synthase (405 aa).

ATP-binding positions include 10–18 (AYSGGLDTS) and Ala-37. L-citrulline-binding residues include Tyr-88 and Ser-93. Residue Gly-118 participates in ATP binding. Thr-120, Asn-124, and Asp-125 together coordinate L-aspartate. Residue Asn-124 coordinates L-citrulline. Residues Arg-128, Ser-179, Ser-188, Glu-264, and Tyr-276 each coordinate L-citrulline.

The protein belongs to the argininosuccinate synthase family. Type 1 subfamily. As to quaternary structure, homotetramer.

The protein localises to the cytoplasm. It carries out the reaction L-citrulline + L-aspartate + ATP = 2-(N(omega)-L-arginino)succinate + AMP + diphosphate + H(+). It participates in amino-acid biosynthesis; L-arginine biosynthesis; L-arginine from L-ornithine and carbamoyl phosphate: step 2/3. The chain is Argininosuccinate synthase from Pseudomonas putida (strain GB-1).